Here is a 404-residue protein sequence, read N- to C-terminus: Argininosuccinate synthase (404 aa).

Residues 12 to 20 (AYSGGLDTS) and Ala39 contribute to the ATP site. Positions 91 and 96 each coordinate L-citrulline. ATP is bound at residue Gly121. Positions 123, 127, and 128 each coordinate L-aspartate. Position 127 (Asn127) interacts with L-citrulline. The L-citrulline site is built by Arg131, Ser180, Ser189, Glu265, and Tyr277.

This sequence belongs to the argininosuccinate synthase family. Type 1 subfamily. Homotetramer.

It is found in the cytoplasm. It catalyses the reaction L-citrulline + L-aspartate + ATP = 2-(N(omega)-L-arginino)succinate + AMP + diphosphate + H(+). The protein operates within amino-acid biosynthesis; L-arginine biosynthesis; L-arginine from L-ornithine and carbamoyl phosphate: step 2/3. The polypeptide is Argininosuccinate synthase (Vibrio parahaemolyticus serotype O3:K6 (strain RIMD 2210633)).